The sequence spans 78 residues: D-alanyl carrier protein (78 aa).

The region spanning 1-78 is the Carrier domain; that stretch reads MAFRENVLEI…MIITQLEALK (78 aa). The residue at position 36 (serine 36) is an O-(pantetheine 4'-phosphoryl)serine.

Belongs to the DltC family. In terms of processing, 4'-phosphopantetheine is transferred from CoA to a specific serine of apo-DCP.

It localises to the cytoplasm. It participates in cell wall biogenesis; lipoteichoic acid biosynthesis. Carrier protein involved in the D-alanylation of lipoteichoic acid (LTA). The loading of thioester-linked D-alanine onto DltC is catalyzed by D-alanine--D-alanyl carrier protein ligase DltA. The DltC-carried D-alanyl group is further transferred to cell membrane phosphatidylglycerol (PG) by forming an ester bond, probably catalyzed by DltD. D-alanylation of LTA plays an important role in modulating the properties of the cell wall in Gram-positive bacteria, influencing the net charge of the cell wall. This chain is D-alanyl carrier protein, found in Listeria innocua serovar 6a (strain ATCC BAA-680 / CLIP 11262).